The sequence spans 67 residues: Probable Sec-independent protein translocase protein TatE (67 aa).

Residues 1–21 form a helical membrane-spanning segment; the sequence is MEGISLAKLLIVGALIVLLFG. The segment at 43-67 is disordered; the sequence is MNDDSDATSKTASEDKNAGQAVHKE. Basic and acidic residues predominate over residues 54 to 67; the sequence is ASEDKNAGQAVHKE.

This sequence belongs to the TatA/E family. TatE subfamily.

It is found in the cell inner membrane. Functionally, part of the twin-arginine translocation (Tat) system that transports large folded proteins containing a characteristic twin-arginine motif in their signal peptide across membranes. TatE shares overlapping functions with TatA. This chain is Probable Sec-independent protein translocase protein TatE, found in Erwinia tasmaniensis (strain DSM 17950 / CFBP 7177 / CIP 109463 / NCPPB 4357 / Et1/99).